Reading from the N-terminus, the 282-residue chain is Protein MGF 505-3R (282 aa).

Belongs to the asfivirus MGF 505 family.

Functionally, plays a role in virus cell tropism, and may be required for efficient virus replication in macrophages. The polypeptide is Protein MGF 505-3R (Ornithodoros (relapsing fever ticks)).